The primary structure comprises 149 residues: UPF0208 membrane protein PBPRA2797 (149 aa).

A run of 2 helical transmembrane segments spans residues 41–60 (FATR…QMAF) and 65–87 (ALPQ…LWWL).

The protein belongs to the UPF0208 family.

Its subcellular location is the cell inner membrane. The sequence is that of UPF0208 membrane protein PBPRA2797 from Photobacterium profundum (strain SS9).